The following is a 308-amino-acid chain: tRNA dimethylallyltransferase (308 aa).

10 to 17 lines the ATP pocket; that stretch reads GPTASGKT. 12–17 contacts substrate; sequence TASGKT. 2 interaction with substrate tRNA regions span residues 35 to 38 and 159 to 163; these read DSSL and QRIFR.

It belongs to the IPP transferase family. As to quaternary structure, monomer. Mg(2+) serves as cofactor.

The catalysed reaction is adenosine(37) in tRNA + dimethylallyl diphosphate = N(6)-dimethylallyladenosine(37) in tRNA + diphosphate. Functionally, catalyzes the transfer of a dimethylallyl group onto the adenine at position 37 in tRNAs that read codons beginning with uridine, leading to the formation of N6-(dimethylallyl)adenosine (i(6)A). The sequence is that of tRNA dimethylallyltransferase from Francisella tularensis subsp. tularensis (strain FSC 198).